The primary structure comprises 204 residues: Histidine biosynthesis bifunctional protein HisIE (204 aa).

Residues 1 to 114 (MLTEQQINQL…FAPAASDWSF (114 aa)) are phosphoribosyl-AMP cyclohydrolase. Residues 115–204 (LYQLEQLLAS…IGRLRERHEK (90 aa)) are phosphoribosyl-ATP pyrophosphohydrolase.

It in the N-terminal section; belongs to the PRA-CH family. In the C-terminal section; belongs to the PRA-PH family.

The protein resides in the cytoplasm. It carries out the reaction 1-(5-phospho-beta-D-ribosyl)-ATP + H2O = 1-(5-phospho-beta-D-ribosyl)-5'-AMP + diphosphate + H(+). The enzyme catalyses 1-(5-phospho-beta-D-ribosyl)-5'-AMP + H2O = 1-(5-phospho-beta-D-ribosyl)-5-[(5-phospho-beta-D-ribosylamino)methylideneamino]imidazole-4-carboxamide. It functions in the pathway amino-acid biosynthesis; L-histidine biosynthesis; L-histidine from 5-phospho-alpha-D-ribose 1-diphosphate: step 2/9. The protein operates within amino-acid biosynthesis; L-histidine biosynthesis; L-histidine from 5-phospho-alpha-D-ribose 1-diphosphate: step 3/9. This chain is Histidine biosynthesis bifunctional protein HisIE (hisI), found in Yersinia pestis.